A 325-amino-acid chain; its full sequence is NADH-quinone oxidoreductase subunit H (325 aa).

Transmembrane regions (helical) follow at residues 11–31 (ILIS…CGAF), 81–101 (AIFT…FAIV), 114–134 (IGIL…LFAG), 154–174 (LSYE…AGSF), 186–206 (VWNV…GVAV), 237–257 (FFVG…TLFF), 265–285 (LPPF…FILI), and 304–324 (VCLP…LYNA).

The protein belongs to the complex I subunit 1 family. NDH-1 is composed of 13 different subunits. Subunits NuoA, H, J, K, L, M, N constitute the membrane sector of the complex.

The protein localises to the cell inner membrane. The enzyme catalyses a quinone + NADH + 5 H(+)(in) = a quinol + NAD(+) + 4 H(+)(out). Its function is as follows. NDH-1 shuttles electrons from NADH, via FMN and iron-sulfur (Fe-S) centers, to quinones in the respiratory chain. The immediate electron acceptor for the enzyme in this species is believed to be ubiquinone. Couples the redox reaction to proton translocation (for every two electrons transferred, four hydrogen ions are translocated across the cytoplasmic membrane), and thus conserves the redox energy in a proton gradient. This subunit may bind ubiquinone. This Yersinia pseudotuberculosis serotype O:1b (strain IP 31758) protein is NADH-quinone oxidoreductase subunit H.